The sequence spans 289 residues: CBY1-interacting BAR domain-containing protein 1 (289 aa).

The N-terminal 47 residues, 1-47 (MMRRTLENRNAQTKQLQTAVSNVEKHFGELCQIFAAYVRKTARLRDK), are a transit peptide targeting the mitochondrion. The BAR-like stretch occupies residues 10 to 220 (NAQTKQLQTA…NIDEDEDLEV (211 aa)). The stretch at 107–178 (KMKRDDLKAT…INNFERQKMK (72 aa)) forms a coiled coil. Positions 265–289 (LRKDQQAEDDEDDELDVTEEENFLK) are disordered. Acidic residues predominate over residues 271 to 289 (AEDDEDDELDVTEEENFLK).

It belongs to the CIBAR family. In terms of assembly, homodimer (via BAR-like domain). Heterodimer with FAM92B (via BAR-like domains). Interacts (via BAR-like domain) with CBY1; this interaction is required for targeting FAM92A to centriole and cilium basal body. Interacts (via BAR-like domain) with CBY3; both proteins form a ninefold symmetric structure at the flagellar base; are recruited to the annulus in a mutually dependent manner and regulate annulus positionning.

It localises to the cytoplasm. The protein localises to the cytoskeleton. Its subcellular location is the microtubule organizing center. The protein resides in the centrosome. It is found in the centriole. It localises to the cilium basal body. The protein localises to the cell projection. Its subcellular location is the cilium. The protein resides in the nucleus. It is found in the mitochondrion inner membrane. It localises to the flagellum. Plays a critical role in regulating mitochondrial ultrastructure and function by maintaining the integrity of mitochondrial morphology, particularly the organization of cristae. Preferentially binds to negatively charged phospholipids like cardiolipin and phosphatidylinositol 4,5-bisphosphate enhancing its interaction with mitochondrial membranes. Induces membrane curvature and tubulation, which are critical for maintaining mitochondrial ultrastructure and the organization of cristae. Plays a crucial role in ciliogenesis. May play a role in limb development through its role in ciliogenesis. Plays a key role in the correct positioning of the annulus, a septin-based ring structure in the sperm flagellum, serving both as a physical barrier and a membrane diffusion barrier that separates the midpiece (MP) from the principal piece (PP). This positioning is essential for proper sperm motility and function. Interacts with CBY3 to form a complex which localizes to the curved membrane region of the flagellar pocket. By doing so, may provide stability and rigidity to the periannular membrane to prevent membrane deformation. This function is crucial for halting annulus migration at the proximal end of the fibrous sheath-containing PP. The protein is CBY1-interacting BAR domain-containing protein 1 of Homo sapiens (Human).